The following is a 391-amino-acid chain: Calcium-binding and spermatid-specific protein 1 (391 aa).

Disordered stretches follow at residues 1 to 23, 90 to 110, and 152 to 221; these read MAED…TPTE, PEKE…GSIT, and KEVV…KEVT. The segment covering 90-101 has biased composition (low complexity); that stretch reads PEKEITTPTETP. Residues S253 and S269 each carry the phosphoserine modification. Positions 271–299 are disordered; that stretch reads EKAKDNVEDPLNDEESTDGANDWMEKETA. The span at 278–287 shows a compositional bias: acidic residues; that stretch reads EDPLNDEEST. Phosphoserine occurs at positions 314, 347, 357, 372, and 376. The interval 330–351 is disordered; sequence EESHVNTTDLPENETTESVTNV.

In terms of tissue distribution, detected only in testis. Expressed from stages X to VIII of the seminiferous epithelial cycle. Expressed from step 13 to step 16 of spermatid development (at protein level).

The protein resides in the cytoplasm. It localises to the mitochondrion inner membrane. Its subcellular location is the cell projection. It is found in the cilium. The protein localises to the flagellum. The protein resides in the cytoplasmic vesicle. It localises to the secretory vesicle. Its subcellular location is the acrosome. Its function is as follows. Calcium-binding protein. Essential for maintaining the structural integrity of the sperm flagella. The polypeptide is Calcium-binding and spermatid-specific protein 1 (Cabs1) (Mus musculus (Mouse)).